A 532-amino-acid polypeptide reads, in one-letter code: Spore coat protein SP85 (532 aa).

Positions 1–19 are cleaved as a signal peptide; it reads MRLLSVLLIGFLCLAGTYA. N47 is a glycosylation site (N-linked (GlcNAc...) asparagine). Residues 197–265 are disordered; that stretch reads TQSPTQPPTQ…PTQPPTQPPV (69 aa). Residues 201–263 are compositionally biased toward pro residues; sequence TQPPTQPPTY…YPPTQPPTQP (63 aa). The Follistatin-like 1 domain maps to 267–289; it reads DCSTLECPEGFHCEIVNNRRTCV. A disordered region spans residues 297–320; that stretch reads THPPTQSPTYPPTQPPTQPPTYPP. 3 consecutive Follistatin-like domains span residues 335-359, 400-423, and 430-452; these read SCDNVRCPRGYHCECNHWENVARCV, TCDQVRCPRKHHCECNRKGQVFCV, and TCKQVGCPENHECVSRRGELHCV.

In terms of assembly, binds to cotE. In terms of processing, O-glycosylated.

The protein localises to the spore wall. Its function is as follows. Required for incorporation of cotE into the spore coat and for the formation of the outer layer. Has a cross-bridging function between cellulose and other coat proteins. The polypeptide is Spore coat protein SP85 (pspB) (Dictyostelium discoideum (Social amoeba)).